The chain runs to 189 residues: Pyridoxal 5'-phosphate synthase subunit PdxT (189 aa).

52 to 54 is a binding site for L-glutamine; that stretch reads GES. The Nucleophile role is filled by Cys-81. L-glutamine contacts are provided by residues Arg-108 and 136 to 137; that span reads IR. Active-site charge relay system residues include His-172 and Glu-174.

It belongs to the glutaminase PdxT/SNO family. In the presence of PdxS, forms a dodecamer of heterodimers. Only shows activity in the heterodimer.

It catalyses the reaction aldehydo-D-ribose 5-phosphate + D-glyceraldehyde 3-phosphate + L-glutamine = pyridoxal 5'-phosphate + L-glutamate + phosphate + 3 H2O + H(+). It carries out the reaction L-glutamine + H2O = L-glutamate + NH4(+). It participates in cofactor biosynthesis; pyridoxal 5'-phosphate biosynthesis. Functionally, catalyzes the hydrolysis of glutamine to glutamate and ammonia as part of the biosynthesis of pyridoxal 5'-phosphate. The resulting ammonia molecule is channeled to the active site of PdxS. The polypeptide is Pyridoxal 5'-phosphate synthase subunit PdxT (Haemophilus ducreyi (strain 35000HP / ATCC 700724)).